A 172-amino-acid polypeptide reads, in one-letter code: Small ribosomal subunit protein bS16 (172 aa).

Positions 125-172 are disordered; sequence KKRKAKEEAEAKAAAEKAAEEAAAAEAAKAEEEAAKAEEADSAEESAE. Composition is skewed to basic and acidic residues over residues 129–144 and 152–163; these read AKEE…KAAE and AKAEEEAAKAEE.

This sequence belongs to the bacterial ribosomal protein bS16 family.

The protein is Small ribosomal subunit protein bS16 of Corynebacterium aurimucosum (strain ATCC 700975 / DSM 44827 / CIP 107346 / CN-1) (Corynebacterium nigricans).